Reading from the N-terminus, the 559-residue chain is Glucose-6-phosphate isomerase 4 (559 aa).

Glutamate 356 acts as the Proton donor in catalysis. Residues histidine 387 and lysine 513 contribute to the active site.

Belongs to the GPI family.

It is found in the cytoplasm. It carries out the reaction alpha-D-glucose 6-phosphate = beta-D-fructose 6-phosphate. The protein operates within carbohydrate biosynthesis; gluconeogenesis. It functions in the pathway carbohydrate degradation; glycolysis; D-glyceraldehyde 3-phosphate and glycerone phosphate from D-glucose: step 2/4. Functionally, catalyzes the reversible isomerization of glucose-6-phosphate to fructose-6-phosphate. This Rhodococcus jostii (strain RHA1) protein is Glucose-6-phosphate isomerase 4.